The chain runs to 146 residues: Probable transporter XF_0765 (146 aa).

The next 4 helical transmembrane spans lie at 9–29 (FTVALAAGLLFGFGLALSEMI), 46–66 (NPSLLFVLGSALAVAFPGMAL), 91–111 (IVFGSAIFGTGWGLTGLCPGP), and 116–136 (LSTGLGPVLLFVAAMAAGMII).

It belongs to the TsuA/YedE (TC 9.B.102) family.

Its subcellular location is the cell inner membrane. The sequence is that of Probable transporter XF_0765 from Xylella fastidiosa (strain 9a5c).